The primary structure comprises 195 residues: Granulocyte colony-stimulating factor (195 aa).

A signal peptide spans 1 to 21 (MKLMALQLLLWHIALWMVPEA). Intrachain disulfides connect Cys-57-Cys-63 and Cys-85-Cys-95. Thr-154 carries O-linked (GalNAc...) threonine glycosylation.

The protein belongs to the IL-6 superfamily. As to quaternary structure, monomer. In terms of processing, O-glycosylated.

It localises to the secreted. Its function is as follows. Granulocyte/macrophage colony-stimulating factors are cytokines that act in hematopoiesis by controlling the production, differentiation, and function of 2 related white cell populations of the blood, the granulocytes and the monocytes-macrophages. This CSF induces granulocytes. In Sus scrofa (Pig), this protein is Granulocyte colony-stimulating factor (CSF3).